Reading from the N-terminus, the 339-residue chain is Phospho-N-acetylmuramoyl-pentapeptide-transferase (339 aa).

A run of 10 helical transmembrane segments spans residues 4 to 24, 53 to 73, 80 to 100, 113 to 133, 145 to 165, 176 to 196, 202 to 222, 228 to 248, 253 to 273, and 318 to 338; these read TTII…PFFI, MGGT…AFVL, AFGA…IGFL, GLTA…FYLV, LFGF…FWVV, GIDG…SVIA, FDVL…FVYN, VFMG…ISIT, WTLL…MLQV, and VDFF…AILY.

This sequence belongs to the glycosyltransferase 4 family. MraY subfamily. Mg(2+) serves as cofactor.

The protein resides in the cell membrane. It catalyses the reaction UDP-N-acetyl-alpha-D-muramoyl-L-alanyl-gamma-D-glutamyl-L-lysyl-D-alanyl-D-alanine + di-trans,octa-cis-undecaprenyl phosphate = Mur2Ac(oyl-L-Ala-gamma-D-Glu-L-Lys-D-Ala-D-Ala)-di-trans,octa-cis-undecaprenyl diphosphate + UMP. It functions in the pathway cell wall biogenesis; peptidoglycan biosynthesis. In terms of biological role, catalyzes the initial step of the lipid cycle reactions in the biosynthesis of the cell wall peptidoglycan: transfers peptidoglycan precursor phospho-MurNAc-pentapeptide from UDP-MurNAc-pentapeptide onto the lipid carrier undecaprenyl phosphate, yielding undecaprenyl-pyrophosphoryl-MurNAc-pentapeptide, known as lipid I. This Streptococcus mutans serotype c (strain ATCC 700610 / UA159) protein is Phospho-N-acetylmuramoyl-pentapeptide-transferase.